The chain runs to 539 residues: Serine/threonine-protein kinase 35 (539 aa).

Residues 103–161 (ITIQGPAPPHLGARRRDEARGARAAPLLLPPPPAAMETGKENGARRGTKSPERKRRSPV) form a disordered region. Positions 148–160 (RGTKSPERKRRSP) are enriched in basic residues. The 329-residue stretch at 207–535 (YSLLAEIGRG…FELETRMDQV (329 aa)) folds into the Protein kinase domain. Residues 213–221 (IGRGSYGVV) and Lys236 contribute to the ATP site. The active-site Proton acceptor is Asp365.

This sequence belongs to the protein kinase superfamily. Ser/Thr protein kinase family. Interacts with PDLIM1/CLP-36. Autophosphorylated.

The protein resides in the nucleus. It localises to the nucleolus. The protein localises to the cytoplasm. It catalyses the reaction L-seryl-[protein] + ATP = O-phospho-L-seryl-[protein] + ADP + H(+). The enzyme catalyses L-threonyl-[protein] + ATP = O-phospho-L-threonyl-[protein] + ADP + H(+). In Mus musculus (Mouse), this protein is Serine/threonine-protein kinase 35 (Stk35).